The primary structure comprises 330 residues: Mitochondrial glycine transporter (330 aa).

Solcar repeat units follow at residues Ser11–Asn94, Leu122–Arg206, and Thr234–Arg318. Transmembrane regions (helical) follow at residues Phe17–Gln42, Gly69–Val95, Leu128–Glu153, Gly181–Lys204, Ile238–Ile264, and Gly293–Ile311.

It belongs to the mitochondrial carrier (TC 2.A.29) family. SLC25A38 subfamily.

Its subcellular location is the mitochondrion inner membrane. The enzyme catalyses glycine(in) = glycine(out). Functionally, mitochondrial glycine transporter that imports glycine into the mitochondrial matrix. Plays an important role in providing glycine for the first enzymatic step in heme biosynthesis, the condensation of glycine with succinyl-CoA to produce 5-aminolevulinate (ALA) in the mitochondrial matrix. The sequence is that of Mitochondrial glycine transporter from Sclerotinia sclerotiorum (strain ATCC 18683 / 1980 / Ss-1) (White mold).